We begin with the raw amino-acid sequence, 214 residues long: Cytochrome c biogenesis ATP-binding export protein CcmA (214 aa).

The ABC transporter domain maps to 4 to 214 (LAVDQLTVSR…FDHGFDGAFL (211 aa)). Residue 36 to 43 (GPNGIGKT) participates in ATP binding.

It belongs to the ABC transporter superfamily. CcmA exporter (TC 3.A.1.107) family. As to quaternary structure, the complex is composed of two ATP-binding proteins (CcmA) and two transmembrane proteins (CcmB).

The protein resides in the cell inner membrane. The enzyme catalyses heme b(in) + ATP + H2O = heme b(out) + ADP + phosphate + H(+). Part of the ABC transporter complex CcmAB involved in the biogenesis of c-type cytochromes; once thought to export heme, this seems not to be the case, but its exact role is uncertain. Responsible for energy coupling to the transport system. The polypeptide is Cytochrome c biogenesis ATP-binding export protein CcmA (Rhodobacter capsulatus (strain ATCC BAA-309 / NBRC 16581 / SB1003)).